We begin with the raw amino-acid sequence, 564 residues long: Ribulokinase (564 aa).

The protein belongs to the ribulokinase family.

It carries out the reaction D-ribulose + ATP = D-ribulose 5-phosphate + ADP + H(+). It catalyses the reaction L-ribulose + ATP = L-ribulose 5-phosphate + ADP + H(+). The protein operates within carbohydrate degradation; L-arabinose degradation via L-ribulose; D-xylulose 5-phosphate from L-arabinose (bacterial route): step 2/3. The protein is Ribulokinase of Geobacillus thermodenitrificans (strain NG80-2).